The primary structure comprises 147 residues: 3-dehydroquinate dehydratase (147 aa).

The active-site Proton acceptor is the Tyr24. Residues Asn75, His81, and Asp88 each contribute to the substrate site. His101 acts as the Proton donor in catalysis. Substrate is bound by residues 102-103 (LS) and Arg112.

Belongs to the type-II 3-dehydroquinase family. In terms of assembly, homododecamer.

It catalyses the reaction 3-dehydroquinate = 3-dehydroshikimate + H2O. The protein operates within metabolic intermediate biosynthesis; chorismate biosynthesis; chorismate from D-erythrose 4-phosphate and phosphoenolpyruvate: step 3/7. In terms of biological role, catalyzes a trans-dehydration via an enolate intermediate. This is 3-dehydroquinate dehydratase from Caulobacter sp. (strain K31).